The following is a 188-amino-acid chain: Phosphoribosylglycinamide formyltransferase (188 aa).

Glycine 12–asparagine 14 lines the N(1)-(5-phospho-beta-D-ribosyl)glycinamide pocket. (6R)-10-formyltetrahydrofolate contacts are provided by residues lysine 66, methionine 91 to isoleucine 94, and asparagine 108. The active-site Proton donor is histidine 110.

This sequence belongs to the GART family.

The catalysed reaction is N(1)-(5-phospho-beta-D-ribosyl)glycinamide + (6R)-10-formyltetrahydrofolate = N(2)-formyl-N(1)-(5-phospho-beta-D-ribosyl)glycinamide + (6S)-5,6,7,8-tetrahydrofolate + H(+). The protein operates within purine metabolism; IMP biosynthesis via de novo pathway; N(2)-formyl-N(1)-(5-phospho-D-ribosyl)glycinamide from N(1)-(5-phospho-D-ribosyl)glycinamide (10-formyl THF route): step 1/1. Its function is as follows. Catalyzes the transfer of a formyl group from 10-formyltetrahydrofolate to 5-phospho-ribosyl-glycinamide (GAR), producing 5-phospho-ribosyl-N-formylglycinamide (FGAR) and tetrahydrofolate. The chain is Phosphoribosylglycinamide formyltransferase from Staphylococcus aureus (strain COL).